Here is a 417-residue protein sequence, read N- to C-terminus: Multifunctional CCA protein (417 aa).

Positions 8 and 11 each coordinate ATP. 2 residues coordinate CTP: Gly8 and Arg11. Mg(2+)-binding residues include Asp21 and Asp23. ATP is bound by residues Arg91, Arg137, and Arg140. CTP is bound by residues Arg91, Arg137, and Arg140. Positions 225-326 (SGIHTLMTLQ…LNVLKKTDAF (102 aa)) constitute an HD domain.

Belongs to the tRNA nucleotidyltransferase/poly(A) polymerase family. Bacterial CCA-adding enzyme type 1 subfamily. In terms of assembly, monomer. Can also form homodimers and oligomers. It depends on Mg(2+) as a cofactor. Ni(2+) serves as cofactor.

The enzyme catalyses a tRNA precursor + 2 CTP + ATP = a tRNA with a 3' CCA end + 3 diphosphate. It catalyses the reaction a tRNA with a 3' CCA end + 2 CTP + ATP = a tRNA with a 3' CCACCA end + 3 diphosphate. In terms of biological role, catalyzes the addition and repair of the essential 3'-terminal CCA sequence in tRNAs without using a nucleic acid template. Adds these three nucleotides in the order of C, C, and A to the tRNA nucleotide-73, using CTP and ATP as substrates and producing inorganic pyrophosphate. tRNA 3'-terminal CCA addition is required both for tRNA processing and repair. Also involved in tRNA surveillance by mediating tandem CCA addition to generate a CCACCA at the 3' terminus of unstable tRNAs. While stable tRNAs receive only 3'-terminal CCA, unstable tRNAs are marked with CCACCA and rapidly degraded. In Neisseria meningitidis serogroup B (strain ATCC BAA-335 / MC58), this protein is Multifunctional CCA protein.